The primary structure comprises 262 residues: MQRYNKLLGQHFIYDREVLDKIIDAATSVKGKHIFEIGAGSGTLSAAILLREPASLISVEKDKRFSESLSSLMAQYQNYKYTIGDALLIRLSSLFKQEKVTIIANLPYNIATHLLLGWMNELEQVREMVLMFQKEVADRICAQPKSKNYGALSVLVQLECKAESQFALAPEVFTPPPRVTSTVLKLTPLKNKWPRNKPVLEKILTEGFSQRRKMIKKSLSRIFKDSEALHSALAQVGASPTMRIEELNPEQLCRLSCIAEMD.

6 residues coordinate S-adenosyl-L-methionine: His11, Ile13, Gly38, Glu60, Asp85, and Asn105.

Belongs to the class I-like SAM-binding methyltransferase superfamily. rRNA adenine N(6)-methyltransferase family. RsmA subfamily.

Its subcellular location is the cytoplasm. It carries out the reaction adenosine(1518)/adenosine(1519) in 16S rRNA + 4 S-adenosyl-L-methionine = N(6)-dimethyladenosine(1518)/N(6)-dimethyladenosine(1519) in 16S rRNA + 4 S-adenosyl-L-homocysteine + 4 H(+). Its function is as follows. Specifically dimethylates two adjacent adenosines (A1518 and A1519) in the loop of a conserved hairpin near the 3'-end of 16S rRNA in the 30S particle. May play a critical role in biogenesis of 30S subunits. This is Ribosomal RNA small subunit methyltransferase A from Neorickettsia sennetsu (strain ATCC VR-367 / Miyayama) (Ehrlichia sennetsu).